The primary structure comprises 1627 residues: MRLWSWVLHLGLLSAALGCGLAERPRRARRDPRAGRPPRPAAGPATCATRAARGRRASPPPPPPPGGAWEAVRVPRRRQQREARGATEEPSPPSRALYFSGRGEQLRLRADLELPRDAFTLQVWLRAEGGQRSPAVITGLYDKCSYISRDRGWVVGIHTISDQDNKDPRYFFSLKTDRARQVTTINAHRSYLPGQWVYLAATYDGQFMKLYVNGAQVATSGEQVGGIFSPLTQKCKVLMLGGSALNHNYRGYIEHFSLWKVARTQREILSDMETHGAHTALPQLLLQENWDNVKHAWSPMKDGSSPKVEFSNAHGFLLDTSLEPPLCGQTLCDNTEVIASYNQLSSFRQPKVVRYRVVNLYEDDHKNPTVTREQVDFQHHQLAEAFKQYNISWELDVLEVSNSSLRRRLILANCDISKIGDENCDPECNHTLTGHDGGDCRHLRHPAFVKKQHNGVCDMDCNYERFNFDGGECCDPEITNVTQTCFDPDSPHRAYLDVNELKNILKLDGSTHLNIFFAKSSEEELAGVATWPWDKEALMHLGGIVLNPSFYGMPGHTHTMIHEIGHSLGLYHVFRGISEIQSCSDPCMETEPSFETGDLCNDTNPAPKHKSCGDPGPGNDTCGFHSFFNTPYNNFMSYADDDCTDSFTPNQVARMHCYLDLVYQGWQPSRKPAPVALAPQVLGHTTDSVTLEWFPPIDGHFFERELGSACHLCLEGRILVQYASNASSPMPCSPSGHWSPREAEGHPDVEQPCKSSVRTWSPNSAVNPHTVPPACPEPQGCYLELEFLYPLVPESLTIWVTFVSTDWDSSGAVNDIKLLAVSGKNISLGPQNVFCDVPLTIRLWDVGEEVYGIQIYTLDEHLEIDAAMLTSTADTPLCLQCKPLKYKVVRDPPLQMDVASILHLNRKFVDMDLNLGSVYQYWVITISGTEESEPSPAVTYIHGSGYCGDGIIQKDQGEQCDDMNKINGDGCSLFCRQEVSFNCIDEPSRCYFHDGDGVCEEFEQKTSIKDCGVYTPQGFLDQWASNASVSHQDQQCPGWVIIGQPAASQVCRTKVIDLSEGISQHAWYPCTISYPYSQLAQTTFWLRAYFSQPMVAAAVIVHLVTDGTYYGDQKQETISVQLLDTKDQSHDLGLHVLSCRNNPLIIPVVHDLSQPFYHSQAVRVSFSSPLVAISGVALRSFDNFDPVTLSSCQRGETYSPAEQSCVHFACEKTDCPELAVENASLNCSSSDRYHGAQCTVSCRTGYVLQIRRDDELIKSQTGPSVTVTCTEGKWNKQVACEPVDCSIPDHHQVYAASFSCPEGTTFGSQCSFQCRHPAQLKGNNSLLTCMEDGLWSFPEALCELMCLAPPPVPNADLQTARCRENKHKVGSFCKYKCKPGYHVPGSSRKSKKRAFKTQCTQDGSWQEGACVPVTCDPPPPKFHGLYQCTNGFQFNSECRIKCEDSDASQGLGSNVIHCRKDGTWNGSFHVCQEMQGQCSVPNELNSNLKLQCPDGYAIGSECATSCLDHNSESIILPMNVTVRDIPHWLNPTRVERVVCTAGLKWYPHPALIHCVKGCEPFMGDNYCDAINNRAFCNYDGGDCCTSTVKTKKVTPFPMSCDLQGDCACRDPQAQEHSRKDLRGYSHG.

Residues 1-22 (MRLWSWVLHLGLLSAALGCGLA) form the signal peptide. Positions 23-81 (ERPRRARRDPRAGRPPRPAAGPATCATRAARGRRASPPPPPPPGGAWEAVRVPRRRQQR) are excised as a propeptide. Positions 23–99 (ERPRRARRDP…PSPPSRALYF (77 aa)) are disordered. Over residues 42-51 (AGPATCATRA) the composition is skewed to low complexity. Disulfide bonds link Cys-144–Cys-235, Cys-327–Cys-622, Cys-332–Cys-657, Cys-414–Cys-428, Cys-424–Cys-440, Cys-457–Cys-473, Cys-474–Cys-485, Cys-583–Cys-600, Cys-587–Cys-612, Cys-710–Cys-878, Cys-713–Cys-881, Cys-753–Cys-835, Cys-775–Cys-781, Cys-947–Cys-975, Cys-960–Cys-971, Cys-983–Cys-990, and Cys-999–Cys-1011. Residues 272-583 (METHGAHTAL…FRGISEIQSC (312 aa)) form a metalloprotease region. N-linked (GlcNAc...) asparagine glycosylation is found at Asn-390 and Asn-402. Residue Asn-429 is glycosylated (N-linked (GlcNAc...) asparagine). The N-linked (GlcNAc...) asparagine glycan is linked to Asn-480. His-562 provides a ligand contact to Zn(2+). Glu-563 is a catalytic residue. Residues His-566 and His-572 each contribute to the Zn(2+) site. Residues Asn-601, Asn-619, and Asn-725 are each glycosylated (N-linked (GlcNAc...) asparagine). The disordered stretch occupies residues 733–754 (SPSGHWSPREAEGHPDVEQPCK). A compositionally biased stretch (basic and acidic residues) spans 739–751 (SPREAEGHPDVEQ). Asn-825 carries N-linked (GlcNAc...) asparagine glycosylation. A glycan (N-linked (GlcNAc...) asparagine) is linked at Asn-1026. Cystine bridges form between Cys-1036-Cys-1070, Cys-1051-Cys-1139, Cys-1192-Cys-1205, Cys-1215-Cys-1269, Cys-1227-Cys-1238, Cys-1242-Cys-1280, Cys-1285-Cys-1329, Cys-1300-Cys-1310, Cys-1314-Cys-1342, Cys-1346-Cys-1399, Cys-1362-Cys-1373, Cys-1377-Cys-1410, Cys-1415-Cys-1458, Cys-1428-Cys-1438, Cys-1442-Cys-1471, Cys-1478-Cys-1539, Cys-1492-Cys-1502, Cys-1506-Cys-1554, and Cys-1558-Cys-1576. Sushi domains follow at residues 1213-1282 (TDCP…ACEP), 1283-1344 (VDCS…LCEL), 1345-1412 (MCLA…ACVP), 1413-1473 (VTCD…VCQE), and 1476-1556 (GQCS…HCVK). 2 N-linked (GlcNAc...) asparagine glycosylation sites follow: Asn-1222 and Asn-1226. An N-linked (GlcNAc...) asparagine glycan is attached at Asn-1323. Asn-1465 carries an N-linked (GlcNAc...) asparagine glycan. Asn-1519 is a glycosylation site (N-linked (GlcNAc...) asparagine).

Belongs to the peptidase M43B family. In terms of assembly, homodimer; disulfide-linked. In pregnancy serum, predominantly found as a disulfide-linked 2:2 heterotetramer with the proform of PRG2. Zn(2+) is required as a cofactor. Post-translationally, there appear to be no free sulfhydryl groups. In terms of tissue distribution, high levels in placenta and pregnancy serum. In placenta, expressed in X cells in septa and anchoring villi, and in syncytiotrophoblasts in the chorionic villi. Lower levels are found in a variety of other tissues including kidney, myometrium, endometrium, ovaries, breast, prostate, bone marrow, colon, fibroblasts and osteoblasts.

Its subcellular location is the secreted. The catalysed reaction is Cleavage of the 135-Met-|-Lys-136 bond in insulin-like growth factor binding protein (IGFBP)-4, and the 143-Ser-|-Lys-144 bond in IGFBP-5.. Its activity is regulated as follows. Inhibited by complexation with the proform of PRG2. In terms of biological role, metalloproteinase which specifically cleaves IGFBP-4 and IGFBP-5, resulting in release of bound IGF. Cleavage of IGFBP-4 is dramatically enhanced by the presence of IGF, whereas cleavage of IGFBP-5 is slightly inhibited by the presence of IGF. This Homo sapiens (Human) protein is Pappalysin-1 (PAPPA).